Consider the following 160-residue polypeptide: Lipoprotein signal peptidase (160 aa).

2 consecutive transmembrane segments (helical) span residues 60–80 and 84–104; these read TEWLIAASCLGVILALTAFFL and LPFLDTRPGVAALGIILAGTI. Residues Asp118 and Asp132 contribute to the active site. Residues 127–147 form a helical membrane-spanning segment; it reads TFNMADSCLTLGIIWLVLLYL.

It belongs to the peptidase A8 family.

The protein localises to the cell membrane. It carries out the reaction Release of signal peptides from bacterial membrane prolipoproteins. Hydrolyzes -Xaa-Yaa-Zaa-|-(S,diacylglyceryl)Cys-, in which Xaa is hydrophobic (preferably Leu), and Yaa (Ala or Ser) and Zaa (Gly or Ala) have small, neutral side chains.. Its pathway is protein modification; lipoprotein biosynthesis (signal peptide cleavage). This protein specifically catalyzes the removal of signal peptides from prolipoproteins. In Dehalococcoides mccartyi (strain ATCC BAA-2266 / KCTC 15142 / 195) (Dehalococcoides ethenogenes (strain 195)), this protein is Lipoprotein signal peptidase.